A 347-amino-acid chain; its full sequence is N-acetyl-gamma-glutamyl-phosphate reductase (347 aa).

C151 is an active-site residue.

Belongs to the NAGSA dehydrogenase family. Type 1 subfamily.

It localises to the cytoplasm. The catalysed reaction is N-acetyl-L-glutamate 5-semialdehyde + phosphate + NADP(+) = N-acetyl-L-glutamyl 5-phosphate + NADPH + H(+). Its pathway is amino-acid biosynthesis; L-arginine biosynthesis; N(2)-acetyl-L-ornithine from L-glutamate: step 3/4. Catalyzes the NADPH-dependent reduction of N-acetyl-5-glutamyl phosphate to yield N-acetyl-L-glutamate 5-semialdehyde. The polypeptide is N-acetyl-gamma-glutamyl-phosphate reductase (Pelotomaculum thermopropionicum (strain DSM 13744 / JCM 10971 / SI)).